Reading from the N-terminus, the 200-residue chain is MIKLIVGLGNPGAEYAATRHNAGFWLVDQLARMGNVTLRNETRFHGYAARANLWGNEVWLLQPQTFMNRSGLATVALARFYKVMPDEILVVHDELDLPPGTVKLKLGGGSGGHNGLKDIAAHLTTQQFWRLRLGIGHPRNLLPPGTAASGQHDVANFVLKAPRKEEQDLIDRAIDQSLDALPELIAGNAEKAMMRLHTAH.

Residue Tyr15 participates in tRNA binding. His20 functions as the Proton acceptor in the catalytic mechanism. TRNA contacts are provided by Phe66, Asn68, and Asn114.

The protein belongs to the PTH family. Monomer.

It localises to the cytoplasm. It carries out the reaction an N-acyl-L-alpha-aminoacyl-tRNA + H2O = an N-acyl-L-amino acid + a tRNA + H(+). Its function is as follows. Hydrolyzes ribosome-free peptidyl-tRNAs (with 1 or more amino acids incorporated), which drop off the ribosome during protein synthesis, or as a result of ribosome stalling. In terms of biological role, catalyzes the release of premature peptidyl moieties from peptidyl-tRNA molecules trapped in stalled 50S ribosomal subunits, and thus maintains levels of free tRNAs and 50S ribosomes. The sequence is that of Peptidyl-tRNA hydrolase from Ralstonia pickettii (strain 12J).